A 560-amino-acid polypeptide reads, in one-letter code: Thermosome subunit 1 (560 aa).

The segment at 525–550 (LSGGQTGSDDDDGGAPGGMGGGMGGM) is disordered. Residues 538-550 (GAPGGMGGGMGGM) show a composition bias toward gly residues.

The protein belongs to the TCP-1 chaperonin family. As to quaternary structure, the thermosome or CCT complex is a oligomeric complex of two octameric double-ring structures; the complex is probably a heterooligomer of CCT1, CCT2 and CCT3 with yet unknown stoichiometry.

Functionally, molecular chaperone that assists in the folding or refolding of nascent or denatured proteins along with ATP hydrolysis. ATPase activity is highest in thermosome assemblies containing CCT1:CCT2, followed by assemblies containing CCT1:CCT2:CCT3. Required for thermosome ATPase activity. Not required for growth. The chain is Thermosome subunit 1 (cct1) from Haloferax volcanii (strain ATCC 29605 / DSM 3757 / JCM 8879 / NBRC 14742 / NCIMB 2012 / VKM B-1768 / DS2) (Halobacterium volcanii).